The following is a 378-amino-acid chain: Cytochrome b (378 aa).

The next 4 helical transmembrane spans lie at 33–53, 77–98, 113–133, and 178–198; these read FGSL…FLAM, WLIR…YLHI, WNTG…GYVL, and FFAF…LHFL. Heme b contacts are provided by H83 and H97. Residues H182 and H196 each contribute to the heme b site. H201 is an a ubiquinone binding site. The next 4 membrane-spanning stretches (helical) occupy residues 226 to 246, 288 to 308, 320 to 340, and 347 to 367; these read YKDL…AVFS, LGGV…PFLH, WSQL…WIGG, and LTTV…FLMP.

The protein belongs to the cytochrome b family. In terms of assembly, the cytochrome bc1 complex contains 3 respiratory subunits (MT-CYB, CYC1 and UQCRFS1), 2 core proteins (UQCRC1 and UQCRC2) and probably 6 low-molecular weight proteins. The cofactor is heme b.

The protein localises to the mitochondrion inner membrane. Component of the ubiquinol-cytochrome c reductase complex (complex III or cytochrome b-c1 complex) that is part of the mitochondrial respiratory chain. The b-c1 complex mediates electron transfer from ubiquinol to cytochrome c. Contributes to the generation of a proton gradient across the mitochondrial membrane that is then used for ATP synthesis. The chain is Cytochrome b (mt-cyb) from Indostomus paradoxus (Armoured stickleback).